The following is a 325-amino-acid chain: Brorin (325 aa).

The signal sequence occupies residues methionine 1–cysteine 27. Residues alanine 37 to glutamate 121 form a disordered region. Basic and acidic residues-rich tracts occupy residues glycine 44–proline 56 and arginine 64–serine 78. Positions arginine 114–aspartate 116 match the Mediates cell adhesion motif. 2 consecutive VWFC domains span residues lysine 153 to lysine 212 and asparagine 216 to lysine 274.

As to quaternary structure, peripherally associated with AMPAR complex. AMPAR complex consists of an inner core made of 4 pore-forming GluA/GRIA proteins (GRIA1, GRIA2, GRIA3 and GRIA4) and 4 major auxiliary subunits arranged in a twofold symmetry. One of the two pairs of distinct binding sites is occupied either by CNIH2, CNIH3 or CACNG2, CACNG3. The other harbors CACNG2, CACNG3, CACNG4, CACNG8 or GSG1L. This inner core of AMPAR complex is complemented by outer core constituents binding directly to the GluA/GRIA proteins at sites distinct from the interaction sites of the inner core constituents. Outer core constituents include at least PRRT1, PRRT2, CKAMP44/SHISA9, FRRS1L and NRN1. The proteins of the inner and outer core serve as a platform for other, more peripherally associated AMPAR constituents, including VWC2. Alone or in combination, these auxiliary subunits control the gating and pharmacology of the AMPAR complex and profoundly impact their biogenesis and protein processing.

It localises to the secreted. Its subcellular location is the extracellular space. The protein resides in the extracellular matrix. It is found in the basement membrane. The protein localises to the synapse. Functionally, BMP antagonist which may play a role in neural development. Promotes cell adhesion. This is Brorin (VWC2) from Homo sapiens (Human).